Reading from the N-terminus, the 341-residue chain is Phosphate acyltransferase (341 aa).

It belongs to the PlsX family. Homodimer. Probably interacts with PlsY.

It is found in the cytoplasm. The catalysed reaction is a fatty acyl-[ACP] + phosphate = an acyl phosphate + holo-[ACP]. It participates in lipid metabolism; phospholipid metabolism. In terms of biological role, catalyzes the reversible formation of acyl-phosphate (acyl-PO(4)) from acyl-[acyl-carrier-protein] (acyl-ACP). This enzyme utilizes acyl-ACP as fatty acyl donor, but not acyl-CoA. The protein is Phosphate acyltransferase of Elusimicrobium minutum (strain Pei191).